We begin with the raw amino-acid sequence, 242 residues long: Sensory transduction protein LytT (242 aa).

Positions 2–116 (HVLIVDDEPL…KITQVIEKAS (115 aa)) constitute a Response regulatory domain. The HTH LytTR-type domain maps to 137–241 (IPIQGEDRIY…VKEFKEKLGL (105 aa)).

In terms of processing, phosphorylated by LytS.

It is found in the cytoplasm. Its function is as follows. Member of the two-component regulatory system LytS/LytT that probably regulates genes involved in cell wall metabolism. The sequence is that of Sensory transduction protein LytT (lytT) from Enterococcus faecalis (strain ATCC 700802 / V583).